A 314-amino-acid polypeptide reads, in one-letter code: Protein YIF1B (314 aa).

An N-acetylmethionine modification is found at M1. Low complexity predominate over residues 1–12 (MHPAGLAAAAAG). The segment at 1 to 55 (MHPAGLAAAAAGTPRLRKWPSKRRIPVSQPGMADPHQLFDDTSSAQSRGYGAQRA) is disordered. Residues 1–156 (MHPAGLAAAA…APRFDVNAPD (156 aa)) are Cytoplasmic-facing. The residue at position 13 (T13) is a Phosphothreonine. Residues 15–25 (RLRKWPSKRRI) are compositionally biased toward basic residues. A Phosphoserine modification is found at S65. A helical membrane pass occupies residues 157 to 177 (LYIPAMAFITYVLVAGLALGT). At 178–192 (QDRFSPDLLGLQASS) the chain is on the extracellular side. A helical transmembrane segment spans residues 193-213 (ALAWLTLEVLAILLSLYLVTV). Residues 214–219 (NTDLTT) lie on the Cytoplasmic side of the membrane. The chain crosses the membrane as a helical span at residues 220 to 240 (IDLVAFLGYKYVGMIGGVLMG). Residue L241 is a topological domain, extracellular. Residues 242–262 (LFGKIGYYLVLGWCCVAIFVF) form a helical membrane-spanning segment. The Cytoplasmic portion of the chain corresponds to 263–292 (MIRTLRLKILADAAAEGVPVRGARNQLRMY). A helical transmembrane segment spans residues 293–313 (LTMAVAAAQPMLMYWLTFHLV). Position 314 (R314) is a topological domain, extracellular.

Belongs to the YIF1 family. As to quaternary structure, interacts with HTR1A (via C-terminus). Interacts with ABCB9 (via TMD0); this interaction allows (but is not essential) the ER-to-Golgi trafficking and strongly depends on a salt bridge within TMD0.

Its subcellular location is the endoplasmic reticulum membrane. The protein resides in the golgi apparatus membrane. It is found in the endoplasmic reticulum-Golgi intermediate compartment membrane. Functions in endoplasmic reticulum to Golgi vesicle-mediated transport and regulates the proper organization of the endoplasmic reticulum and the Golgi. Plays a key role in targeting to neuronal dendrites receptors such as HTR1A. Plays also a role in primary cilium and sperm flagellum assembly probably through protein transport to these compartments. The chain is Protein YIF1B from Homo sapiens (Human).